The primary structure comprises 343 residues: Dihydroorotase (343 aa).

2 residues coordinate Zn(2+): histidine 14 and histidine 16. Residues 16–18 (HLR) and asparagine 42 contribute to the substrate site. Zn(2+) contacts are provided by lysine 99, histidine 136, and histidine 174. Residue lysine 99 is modified to N6-carboxylysine. Histidine 136 contributes to the substrate binding site. Substrate is bound at residue leucine 219. Aspartate 247 is a binding site for Zn(2+). Aspartate 247 is an active-site residue. Residues histidine 251 and alanine 263 each contribute to the substrate site.

It belongs to the metallo-dependent hydrolases superfamily. DHOase family. Class II DHOase subfamily. In terms of assembly, homodimer. Requires Zn(2+) as cofactor.

It catalyses the reaction (S)-dihydroorotate + H2O = N-carbamoyl-L-aspartate + H(+). The protein operates within pyrimidine metabolism; UMP biosynthesis via de novo pathway; (S)-dihydroorotate from bicarbonate: step 3/3. In terms of biological role, catalyzes the reversible cyclization of carbamoyl aspartate to dihydroorotate. The protein is Dihydroorotase of Psychromonas ingrahamii (strain DSM 17664 / CCUG 51855 / 37).